The chain runs to 481 residues: Alginate biosynthesis protein AlgA (481 aa).

This sequence belongs to the mannose-6-phosphate isomerase type 2 family. As to quaternary structure, monomer. Co(2+) serves as cofactor.

It carries out the reaction D-mannose 6-phosphate = D-fructose 6-phosphate. The enzyme catalyses alpha-D-mannose 1-phosphate + GTP + H(+) = GDP-alpha-D-mannose + diphosphate. The protein operates within nucleotide-sugar biosynthesis; GDP-alpha-D-mannose biosynthesis; GDP-alpha-D-mannose from alpha-D-mannose 1-phosphate (GTP route): step 1/1. Its pathway is nucleotide-sugar biosynthesis; GDP-alpha-D-mannose biosynthesis; alpha-D-mannose 1-phosphate from D-fructose 6-phosphate: step 1/2. Produces a precursor for alginate polymerization. The alginate layer provides a protective barrier against host immune defenses and antibiotics. The chain is Alginate biosynthesis protein AlgA (algA) from Pseudomonas aeruginosa (strain ATCC 15692 / DSM 22644 / CIP 104116 / JCM 14847 / LMG 12228 / 1C / PRS 101 / PAO1).